The chain runs to 306 residues: Cysteine synthase (306 aa).

At lysine 46 the chain carries N6-(pyridoxal phosphate)lysine. Pyridoxal 5'-phosphate is bound by residues asparagine 76, 180–184, and serine 267; that span reads GSGGT.

Belongs to the cysteine synthase/cystathionine beta-synthase family. Homodimer. Pyridoxal 5'-phosphate is required as a cofactor.

It carries out the reaction O-acetyl-L-serine + hydrogen sulfide = L-cysteine + acetate. It functions in the pathway amino-acid biosynthesis; L-cysteine biosynthesis; L-cysteine from L-serine: step 2/2. This is Cysteine synthase (cysM) from Helicobacter pylori (strain ATCC 700392 / 26695) (Campylobacter pylori).